The following is a 416-amino-acid chain: GTPase Obg (416 aa).

One can recognise an Obg domain in the interval 1 to 157 (MFQDVLVITV…RRLRLELMLI (157 aa)). Disordered stretches follow at residues 25–44 (EKFV…GGSV) and 62–82 (TYKA…RGGE). The span at 32-42 (GPDGGDGGRGG) shows a compositional bias: gly residues. Basic and acidic residues predominate over residues 63–72 (YKAEDGEHGR). Residues 158-324 (ADVGLVGYPN…LKEALHALVR (167 aa)) enclose the OBG-type G domain. GTP is bound by residues 164-171 (GYPNAGKS), 189-193 (FTTLS), 211-214 (DIPG), 277-280 (NKVD), and 305-307 (SAL). Mg(2+) is bound by residues S171 and T191. The OCT domain occupies 336-414 (PRKEVQAGVE…IGGLEFEYIP (79 aa)).

This sequence belongs to the TRAFAC class OBG-HflX-like GTPase superfamily. OBG GTPase family. As to quaternary structure, monomer. The cofactor is Mg(2+).

Its subcellular location is the cytoplasm. An essential GTPase which binds GTP, GDP and possibly (p)ppGpp with moderate affinity, with high nucleotide exchange rates and a fairly low GTP hydrolysis rate. Plays a role in control of the cell cycle, stress response, ribosome biogenesis and in those bacteria that undergo differentiation, in morphogenesis control. The polypeptide is GTPase Obg (Thermus thermophilus (strain ATCC 27634 / DSM 579 / HB8)).